The chain runs to 191 residues: Adenylate kinase (191 aa).

11–16 is a binding site for ATP; the sequence is GAGKGT. The tract at residues 31 to 60 is NMP; sequence STGDILRSNVAERSPLGIKAKDYMDKGDLV. AMP contacts are provided by residues T32, R37, 58–60, 86–89, and Q93; these read DLV and GFPR. The tract at residues 132 to 138 is LID; the sequence is SRKREDD. R133 contributes to the ATP binding site. AMP-binding residues include R135 and R146. N174 is a binding site for ATP.

It belongs to the adenylate kinase family. Monomer.

It is found in the cytoplasm. It catalyses the reaction AMP + ATP = 2 ADP. The protein operates within purine metabolism; AMP biosynthesis via salvage pathway; AMP from ADP: step 1/1. In terms of biological role, catalyzes the reversible transfer of the terminal phosphate group between ATP and AMP. Plays an important role in cellular energy homeostasis and in adenine nucleotide metabolism. This Trichodesmium erythraeum (strain IMS101) protein is Adenylate kinase.